Here is a 305-residue protein sequence, read N- to C-terminus: Serine/threonine-protein phosphatase 6 catalytic subunit (305 aa).

Residue Met-1 is modified to N-acetylmethionine. The Mn(2+) site is built by Asp-53, His-55, Asp-81, and Asn-113. The active-site Proton donor is the His-114. 2 residues coordinate Mn(2+): His-163 and His-237.

The protein belongs to the PPP phosphatase family. PP-6 (PP-V) subfamily. Protein phosphatase 6 (PP6) holoenzyme is proposed to be a heterotrimeric complex formed by the catalytic subunit, a SAPS domain-containing subunit (PP6R) and an ankyrin repeat-domain containing regulatory subunit (ARS). Interacts with subunits PPP6R1, PPP6R2 and PPP6R3. Interacts with subunit ANKRD28. Interacts with IGBP1. Interacts with MAP3K7. Interacts with NFKBIE. Interacts with TRIM14 and WRNIP1; these interactions positively regulate the RIG-I signaling pathway. Mn(2+) serves as cofactor. Ubiquitously expressed in all tissues tested with strongest expression in lung, spleen, liver, kidney and brain. Weaker expression observed in bladder, pancreas, heart and skeletal muscle.

It is found in the mitochondrion. Its subcellular location is the cytoplasm. The enzyme catalyses O-phospho-L-seryl-[protein] + H2O = L-seryl-[protein] + phosphate. The catalysed reaction is O-phospho-L-threonyl-[protein] + H2O = L-threonyl-[protein] + phosphate. Functionally, catalytic subunit of protein phosphatase 6 (PP6). PP6 is a component of a signaling pathway regulating cell cycle progression in response to IL2 receptor stimulation. N-terminal domain restricts G1 to S phase progression in cancer cells, in part through control of cyclin D13 During mitosis, regulates spindle positioning. Down-regulates MAP3K7 kinase activation of the IL1 signaling pathway by dephosphorylation of MAP3K7. Acts as a regulator of innate immunity by mediating dephosphorylation CGAS, STING1 and RIGI. Also participates in the innate immune defense against viruses by desphosphorylating RIGI, an essential step that triggers RIGI-mediated signaling activation. Also regulates innate immunity by acting as a negative regulator of the cGAS-STING pathway: mediates dephosphorylation and inactivation of CGAS and STING1. CGAS dephosphorylation at 'Ser-420' impairs its ability to bind GTP, thereby inactivating it. The protein is Serine/threonine-protein phosphatase 6 catalytic subunit of Mus musculus (Mouse).